The following is a 356-amino-acid chain: Protein-arginine kinase (356 aa).

Positions 24-256 (IIISSRVRVA…RQILAQEQAA (233 aa)) constitute a Phosphagen kinase C-terminal domain. Residues 27–31 (SSRVR), His93, Arg127, 178–182 (RASVM), and 209–214 (RGLYGE) contribute to the ATP site. An RDXXRA motif of the pArg binding pocket involved in allosteric regulation motif is present at residues 339–344 (RDIFRA).

It belongs to the ATP:guanido phosphotransferase family.

It carries out the reaction L-arginyl-[protein] + ATP = N(omega)-phospho-L-arginyl-[protein] + ADP + H(+). With respect to regulation, appears to be allosterically activated by the binding of pArg-containing polypeptides to the pArg-binding pocket localized in the C-terminal domain of McsB. Functionally, catalyzes the specific phosphorylation of arginine residues in proteins. In Pelotomaculum thermopropionicum (strain DSM 13744 / JCM 10971 / SI), this protein is Protein-arginine kinase.